A 42-amino-acid chain; its full sequence is Potassium channel toxin gamma-KTx 1.4 (42 aa).

4 disulfide bridges follow: Cys-5–Cys-23, Cys-11–Cys-34, Cys-20–Cys-39, and Cys-24–Cys-41.

Belongs to the ergtoxin family. Gamma-KTx 1 subfamily. Expressed by the venom gland.

The protein localises to the secreted. Functionally, blocks Kv11/ERG potassium channels. The protein is Potassium channel toxin gamma-KTx 1.4 of Centruroides sculpturatus (Arizona bark scorpion).